Consider the following 161-residue polypeptide: Regulatory protein RecX (161 aa).

The protein belongs to the RecX family.

The protein resides in the cytoplasm. Functionally, modulates RecA activity. This Thermotoga petrophila (strain ATCC BAA-488 / DSM 13995 / JCM 10881 / RKU-1) protein is Regulatory protein RecX.